Here is a 275-residue protein sequence, read N- to C-terminus: Tryptophan synthase alpha chain (275 aa).

Active-site proton acceptor residues include E60 and D71.

The protein belongs to the TrpA family. In terms of assembly, tetramer of two alpha and two beta chains.

It carries out the reaction (1S,2R)-1-C-(indol-3-yl)glycerol 3-phosphate + L-serine = D-glyceraldehyde 3-phosphate + L-tryptophan + H2O. Its pathway is amino-acid biosynthesis; L-tryptophan biosynthesis; L-tryptophan from chorismate: step 5/5. Its function is as follows. The alpha subunit is responsible for the aldol cleavage of indoleglycerol phosphate to indole and glyceraldehyde 3-phosphate. The protein is Tryptophan synthase alpha chain of Prochlorococcus marinus (strain MIT 9313).